The chain runs to 379 residues: Inactive deoxyhypusine synthase (379 aa).

The tract at residues 1–48 (MLASVPAPRPAKKDSAASRRKSASKSTGAAVKDGSSARVSASGAAESP) is disordered. A compositionally biased stretch (low complexity) spans 36–47 (SARVSASGAAES). NAD(+)-binding positions include 115–119 (SNMIS), 141–143 (SAG), E147, and D256. Position 146–147 (146–147 (EE)) interacts with spermidine. Residue D261 participates in spermidine binding. Residue G302 coordinates NAD(+). Residue H307 coordinates spermidine. 323–324 (TG) is an NAD(+) binding site. Spermidine-binding positions include 329–331 (GCV) and 338–344 (DDVACGL). An NAD(+)-binding site is contributed by 357–358 (DA).

This sequence belongs to the deoxyhypusine synthase family.

In Leishmania donovani, this protein is Inactive deoxyhypusine synthase.